Here is a 405-residue protein sequence, read N- to C-terminus: 4-hydroxy-3-methylbut-2-enyl diphosphate reductase (405 aa).

Residue Cys-66 participates in [4Fe-4S] cluster binding. Position 96 (His-96) interacts with (2E)-4-hydroxy-3-methylbut-2-enyl diphosphate. A dimethylallyl diphosphate-binding site is contributed by His-96. Position 96 (His-96) interacts with isopentenyl diphosphate. Residue Cys-157 participates in [4Fe-4S] cluster binding. (2E)-4-hydroxy-3-methylbut-2-enyl diphosphate is bound at residue His-185. His-185 is a binding site for dimethylallyl diphosphate. Residue His-185 participates in isopentenyl diphosphate binding. Glu-187 (proton donor) is an active-site residue. A (2E)-4-hydroxy-3-methylbut-2-enyl diphosphate-binding site is contributed by Thr-250. Cys-288 lines the [4Fe-4S] cluster pocket. Positions 317, 318, 319, and 380 each coordinate (2E)-4-hydroxy-3-methylbut-2-enyl diphosphate. Dimethylallyl diphosphate contacts are provided by Ser-317, Ser-318, Asn-319, and Ser-380. Residues Ser-317, Ser-318, Asn-319, and Ser-380 each contribute to the isopentenyl diphosphate site.

This sequence belongs to the IspH family. [4Fe-4S] cluster is required as a cofactor.

It carries out the reaction isopentenyl diphosphate + 2 oxidized [2Fe-2S]-[ferredoxin] + H2O = (2E)-4-hydroxy-3-methylbut-2-enyl diphosphate + 2 reduced [2Fe-2S]-[ferredoxin] + 2 H(+). The catalysed reaction is dimethylallyl diphosphate + 2 oxidized [2Fe-2S]-[ferredoxin] + H2O = (2E)-4-hydroxy-3-methylbut-2-enyl diphosphate + 2 reduced [2Fe-2S]-[ferredoxin] + 2 H(+). Its pathway is isoprenoid biosynthesis; dimethylallyl diphosphate biosynthesis; dimethylallyl diphosphate from (2E)-4-hydroxy-3-methylbutenyl diphosphate: step 1/1. The protein operates within isoprenoid biosynthesis; isopentenyl diphosphate biosynthesis via DXP pathway; isopentenyl diphosphate from 1-deoxy-D-xylulose 5-phosphate: step 6/6. Functionally, catalyzes the conversion of 1-hydroxy-2-methyl-2-(E)-butenyl 4-diphosphate (HMBPP) into a mixture of isopentenyl diphosphate (IPP) and dimethylallyl diphosphate (DMAPP). Acts in the terminal step of the DOXP/MEP pathway for isoprenoid precursor biosynthesis. The protein is 4-hydroxy-3-methylbut-2-enyl diphosphate reductase of Prochlorococcus marinus (strain SARG / CCMP1375 / SS120).